Reading from the N-terminus, the 286-residue chain is Thymidylate synthase (286 aa).

Residue 140–141 (RR) participates in dUMP binding. Cys161 serves as the catalytic Nucleophile. Residues 185-188 (RSND), Asn196, and 226-228 (HIY) each bind dUMP. Asp188 is a binding site for (6R)-5,10-methylene-5,6,7,8-tetrahydrofolate. Ala285 is a binding site for (6R)-5,10-methylene-5,6,7,8-tetrahydrofolate.

This sequence belongs to the thymidylate synthase family. Bacterial-type ThyA subfamily. As to quaternary structure, homodimer.

The protein localises to the cytoplasm. The catalysed reaction is dUMP + (6R)-5,10-methylene-5,6,7,8-tetrahydrofolate = 7,8-dihydrofolate + dTMP. The protein operates within pyrimidine metabolism; dTTP biosynthesis. In terms of biological role, catalyzes the reductive methylation of 2'-deoxyuridine-5'-monophosphate (dUMP) to 2'-deoxythymidine-5'-monophosphate (dTMP) while utilizing 5,10-methylenetetrahydrofolate (mTHF) as the methyl donor and reductant in the reaction, yielding dihydrofolate (DHF) as a by-product. This enzymatic reaction provides an intracellular de novo source of dTMP, an essential precursor for DNA biosynthesis. In Streptococcus thermophilus (strain ATCC BAA-250 / LMG 18311), this protein is Thymidylate synthase.